A 1272-amino-acid polypeptide reads, in one-letter code: AF4/FMR2 family member 2 (1272 aa).

Disordered regions lie at residues 93 to 183 (IPKN…LTQD), 201 to 225 (QIGE…GEDA), and 283 to 302 (AYVR…PTLK). A compositionally biased stretch (polar residues) spans 97–107 (SVPQNPNNKNE). Residues 151-160 (SKPEWSRDSH) are compositionally biased toward basic and acidic residues. Over residues 161–183 (NPSTVLASQASGQPNKMQTLTQD) the composition is skewed to polar residues. A Phosphoserine modification is found at Ser-391. 4 disordered regions span residues 418 to 491 (KAKP…KWQL), 535 to 687 (TNAS…DQEE), 779 to 829 (SLHA…PEKK), and 842 to 903 (PPCI…QDKN). Pro residues predominate over residues 426-438 (VNPPLATPQPPPA). Over residues 439–452 (VQASGGSGSSSESE) the composition is skewed to low complexity. Position 478 is a phosphothreonine (Thr-478). A compositionally biased stretch (basic and acidic residues) spans 543–558 (EPKERPLLSLIREKAR). Residues 576 to 586 (STTSETVSQRT) show a composition bias toward polar residues. A compositionally biased stretch (basic and acidic residues) spans 616–629 (PKEKESVELHDPPR). A compositionally biased stretch (basic residues) spans 630–640 (GRNKATAHKPA). Residues 818–829 (PTEVAEKIPEKK) are compositionally biased toward basic and acidic residues. Composition is skewed to pro residues over residues 844 to 853 (CISPAPPHKP) and 874 to 883 (FPPPLSPLPE).

It belongs to the AF4 family.

Its subcellular location is the nucleus speckle. Its function is as follows. RNA-binding protein. Might be involved in alternative splicing regulation through an interaction with G-quartet RNA structure. In Pan troglodytes (Chimpanzee), this protein is AF4/FMR2 family member 2 (AFF2).